The following is a 622-amino-acid chain: Auxin response factor 11 (622 aa).

The segment at residues 145 to 247 is a DNA-binding region (TF-B3); the sequence is FVKILTASDT…DLRVGVRRLA (103 aa). 2 disordered regions span residues 358–398 and 483–513; these read SIQR…ISEI and SNISDSTTKCQDPNSSNSPKEQKQQTSTRSR. 2 stretches are compositionally biased toward polar residues: residues 376–387 and 483–511; these read SALTPTPTQQQS and SNISDSTTKCQDPNSSNSPKEQKQQTSTR. The region spanning 511-594 is the PB1 domain; it reads RSRIKVQMQG…KKLFIYPSDE (84 aa).

Belongs to the ARF family. As to quaternary structure, homodimers and heterodimers.

It localises to the nucleus. In terms of biological role, auxin response factors (ARFs) are transcriptional factors that bind specifically to the DNA sequence 5'-TGTCTC-3' found in the auxin-responsive promoter elements (AuxREs). Could act as transcriptional activator or repressor. Formation of heterodimers with Aux/IAA proteins may alter their ability to modulate early auxin response genes expression. This chain is Auxin response factor 11 (ARF11), found in Arabidopsis thaliana (Mouse-ear cress).